Consider the following 170-residue polypeptide: Large ribosomal subunit protein uL5 (170 aa).

This sequence belongs to the universal ribosomal protein uL5 family. Part of the 50S ribosomal subunit; contacts the 5S rRNA and probably tRNA. Forms a bridge to the 30S subunit in the 70S ribosome.

This is one of the proteins that bind and probably mediate the attachment of the 5S RNA into the large ribosomal subunit, where it forms part of the central protuberance. In the 70S ribosome it contacts protein S13 of the 30S subunit (bridge B1b), connecting the 2 subunits; this bridge is implicated in subunit movement. May contact the P site tRNA; the 5S rRNA and some of its associated proteins might help stabilize positioning of ribosome-bound tRNAs. This is Large ribosomal subunit protein uL5 from Thermoplasma acidophilum (strain ATCC 25905 / DSM 1728 / JCM 9062 / NBRC 15155 / AMRC-C165).